The primary structure comprises 37 residues: MVEPLLSGIVLGLVPVTIAGLFVTAYLQYRRGDLATF.

A helical membrane pass occupies residues 5-25 (LLSGIVLGLVPVTIAGLFVTA).

Belongs to the PetG family. As to quaternary structure, the 4 large subunits of the cytochrome b6-f complex are cytochrome b6, subunit IV (17 kDa polypeptide, PetD), cytochrome f and the Rieske protein, while the 4 small subunits are PetG, PetL, PetM and PetN. The complex functions as a dimer.

It localises to the plastid. The protein localises to the chloroplast thylakoid membrane. Its function is as follows. Component of the cytochrome b6-f complex, which mediates electron transfer between photosystem II (PSII) and photosystem I (PSI), cyclic electron flow around PSI, and state transitions. PetG is required for either the stability or assembly of the cytochrome b6-f complex. In Chlamydomonas moewusii (Chlamydomonas eugametos), this protein is Cytochrome b6-f complex subunit 5.